We begin with the raw amino-acid sequence, 341 residues long: tRNA N6-adenosine threonylcarbamoyltransferase (341 aa).

Fe cation-binding residues include H111 and H115. Substrate is bound by residues V133–G137, D166, G179, D183, and N271. Residue D299 participates in Fe cation binding.

Belongs to the KAE1 / TsaD family. It depends on Fe(2+) as a cofactor.

Its subcellular location is the cytoplasm. The catalysed reaction is L-threonylcarbamoyladenylate + adenosine(37) in tRNA = N(6)-L-threonylcarbamoyladenosine(37) in tRNA + AMP + H(+). Its function is as follows. Required for the formation of a threonylcarbamoyl group on adenosine at position 37 (t(6)A37) in tRNAs that read codons beginning with adenine. Is involved in the transfer of the threonylcarbamoyl moiety of threonylcarbamoyl-AMP (TC-AMP) to the N6 group of A37, together with TsaE and TsaB. TsaD likely plays a direct catalytic role in this reaction. The chain is tRNA N6-adenosine threonylcarbamoyltransferase from Fusobacterium nucleatum subsp. nucleatum (strain ATCC 25586 / DSM 15643 / BCRC 10681 / CIP 101130 / JCM 8532 / KCTC 2640 / LMG 13131 / VPI 4355).